The sequence spans 448 residues: Inositol hexakisphosphate kinase 2 (448 aa).

Residues 229-231 (ENL) and Asp-242 each bind ATP. Substrate contacts are provided by residues 238–246 (PCVLDLKMG), Lys-244, and 258–265 (KAANQIRK). Asp-405 is an ATP binding site. His-408 contacts substrate.

It belongs to the inositol phosphokinase (IPK) family. In terms of tissue distribution, highly expressed in brain and lung, and at slightly lower levels in liver, kidney and testis.

The protein resides in the nucleus. It catalyses the reaction 1D-myo-inositol hexakisphosphate + ATP = 5-diphospho-1D-myo-inositol 1,2,3,4,6-pentakisphosphate + ADP. Its pathway is phospholipid metabolism; phosphatidylinositol metabolism. Converts inositol hexakisphosphate (InsP6) to diphosphoinositol pentakisphosphate (InsP7/PP-InsP5). May play a role in the regulation of Na(+)-dependent phosphate cotransport, possibly via its role in diphosphoinositol pentakisphosphate (InsP7/PP-InsP5) biosynthesis. The polypeptide is Inositol hexakisphosphate kinase 2 (Ip6k2) (Mus musculus (Mouse)).